The primary structure comprises 150 residues: Large ribosomal subunit protein eL19 (150 aa).

The interval 55 to 89 is disordered; the sequence is IKGQSRYRAKIRHEQKKKGRHRGPGSRKGKKTARM.

This sequence belongs to the eukaryotic ribosomal protein eL19 family. Part of the 50S ribosomal subunit.

Binds to the 23S rRNA. This is Large ribosomal subunit protein eL19 from Pyrococcus furiosus (strain ATCC 43587 / DSM 3638 / JCM 8422 / Vc1).